The following is a 476-amino-acid chain: Ribosomal RNA small subunit methyltransferase F (476 aa).

S-adenosyl-L-methionine is bound by residues 124–130 (ASAPGSK), glutamate 148, aspartate 175, and aspartate 193. Residue cysteine 246 is the Nucleophile of the active site.

It belongs to the class I-like SAM-binding methyltransferase superfamily. RsmB/NOP family.

The protein resides in the cytoplasm. It carries out the reaction cytidine(1407) in 16S rRNA + S-adenosyl-L-methionine = 5-methylcytidine(1407) in 16S rRNA + S-adenosyl-L-homocysteine + H(+). Specifically methylates the cytosine at position 1407 (m5C1407) of 16S rRNA. This Photobacterium profundum (strain SS9) protein is Ribosomal RNA small subunit methyltransferase F.